The chain runs to 371 residues: Barbiturase 2 (371 aa).

The interval 1-104 (MTRPIEVRKV…TIFAYAPEGR (104 aa)) is RU A. Residues Arg53 and 83–84 (SG) contribute to the substrate site. Positions 112 to 247 (RVTVGYAMSE…AQIVVVGNAR (136 aa)) are RU B. Residue Lys162 is part of the active site. Substrate is bound by residues Asn194 and 230–231 (SS). The Nucleophile role is filled by Ser230. An RU C region spans residues 253–371 (FRVGHSIMKD…PVIAIVDLEA (119 aa)). Residue Glu303 participates in Mg(2+) binding. Substrate is bound by residues Lys330 and 349-350 (SV). Mg(2+)-binding residues include Ala352, Gln355, Gly356, Pro357, and Gly360.

It belongs to the cyclic amide hydrolase (CyAH) family. In terms of assembly, homotetramer.

It carries out the reaction barbiturate + H2O = 3-oxo-3-ureidopropanoate. It participates in pyrimidine metabolism; uracil degradation via oxidative pathway; malonate and urea from uracil: step 2/3. Responsible for the hydrolysis of barbituric acid (2,4,6-trihydroxy-1,3-pyrimidine), an intermediate in the oxidative catabolism of pyrimidines. Catalyzes the hydrolytic opening of the pyrimidine ring of barbituric acid to yield ureidomalonic acid. Can also use cyanuric acid as a substrate, albeit with lower efficiency. The polypeptide is Barbiturase 2 (Nocardioides sp. (strain ATCC BAA-499 / JS614)).